The following is a 217-amino-acid chain: Somatotropin (217 aa).

Residues 1-27 (MMAAGPRASLLLAFALLCLPWTQEVGA) form the signal peptide. His46 serves as a coordination point for Zn(2+). The cysteines at positions 79 and 190 are disulfide-linked. Residue Ser132 is modified to Phosphoserine. Glu199 serves as a coordination point for Zn(2+). Cys207 and Cys215 are disulfide-bonded.

This sequence belongs to the somatotropin/prolactin family.

Its subcellular location is the secreted. Plays an important role in growth control. Its major role in stimulating body growth is to stimulate the liver and other tissues to secrete IGF1. It stimulates both the differentiation and proliferation of myoblasts. It also stimulates amino acid uptake and protein synthesis in muscle and other tissues. This chain is Somatotropin (GH1), found in Cervus elaphus (Red deer).